Reading from the N-terminus, the 457-residue chain is MSAENESPGLPNGGACCASATGHFLLVGNKVTVVLGAQWGDEGKGKVVDLLAQDADIVCRCQGGNNAGHTVVVDSVEYDFHLLPSGIINQNAIAFIGNGVVIHLPGLFEEAEKNLKKGQGLAGWEKRLCISDRAHIVFDFHQAADGIQEQQRQEQAGKNLGTTKKGIGPVYSSKAARSGLRMCDLVSDFNEFSQRFKLLAKQYKSMYPSLEIDIDGELKKLQDYADRVKPMVKDGVYYIYEALHGPPKKILVEGANAALLDIDFGTYPFVTSSNCTVGGVCTGLGIPPQSIGDVYGVVKAYTTRVGIGAFPTEQNNDIGEMLQTRGHEYGVTTGRKRRCGWLDLVLLRYAHMINGFTALALTKLDILDVFSEIKVGVSYKIDGKNIPHFPANQEVLNKVEVEYETLPGWNKDTSNVRTFEELPENAKKYVQFIKEELGIPIKWIGVGKSRESMIQLF.

GTP-binding positions include glycine 40 to lysine 46 and glycine 68 to threonine 70. Aspartate 41 acts as the Proton acceptor in catalysis. Residues aspartate 41 and glycine 68 each coordinate Mg(2+). Aspartate 41 serves as a coordination point for substrate. Residues aspartate 41–lysine 44, asparagine 66–histidine 69, threonine 163, arginine 177, asparagine 256, threonine 271, and arginine 335 each bind IMP. The active-site Proton donor is the histidine 69. Residue valine 331–arginine 337 coordinates substrate. GTP-binding positions include arginine 337, lysine 363 to aspartate 365, and glycine 445 to lysine 448.

This sequence belongs to the adenylosuccinate synthetase family. In terms of assembly, homodimer. The cofactor is Mg(2+).

The protein localises to the cytoplasm. The protein resides in the mitochondrion. It catalyses the reaction IMP + L-aspartate + GTP = N(6)-(1,2-dicarboxyethyl)-AMP + GDP + phosphate + 2 H(+). Its pathway is purine metabolism; AMP biosynthesis via de novo pathway; AMP from IMP: step 1/2. Inhibited competitively by AMP and IMP and non-competitively by fructose 1,6-bisphosphate. Functionally, plays an important role in the de novo pathway and in the salvage pathway of purine nucleotide biosynthesis. Catalyzes the first committed step in the biosynthesis of AMP from IMP. The sequence is that of Adenylosuccinate synthetase isozyme 2 (adss2) from Xenopus laevis (African clawed frog).